Here is a 132-residue protein sequence, read N- to C-terminus: Heat shock protein 15 homolog (132 aa).

Residues 11-73 form the S4 RNA-binding domain; it reads VRLDKWLWAA…DEREVRVLQV (63 aa). 2 stretches are compositionally biased toward basic and acidic residues: residues 94–105 and 114–125; these read LKKRAENSEARR and PERRPDKQERRQ. Residues 94 to 132 form a disordered region; that stretch reads LKKRAENSEARRFNSQFAPSPERRPDKQERRQLIKVKQY.

The protein belongs to the HSP15 family.

Functionally, may play an important role in binding of nucleic acid. More specific for RNA. This is Heat shock protein 15 homolog (hslR) from Aeromonas salmonicida.